Here is a 345-residue protein sequence, read N- to C-terminus: Selenide, water dikinase (345 aa).

Residue Cys15 is part of the active site. ATP contacts are provided by residues Lys18 and 46 to 48 (SKD). Mg(2+) is bound at residue Asp49. ATP contacts are provided by residues Asp66, Asp89, and 137 to 139 (GHS). Asp89 contacts Mg(2+). Asp225 serves as a coordination point for Mg(2+).

Belongs to the selenophosphate synthase 1 family. Class I subfamily. Homodimer. Requires Mg(2+) as cofactor.

The catalysed reaction is hydrogenselenide + ATP + H2O = selenophosphate + AMP + phosphate + 2 H(+). Its function is as follows. Synthesizes selenophosphate from selenide and ATP. In Aeromonas hydrophila subsp. hydrophila (strain ATCC 7966 / DSM 30187 / BCRC 13018 / CCUG 14551 / JCM 1027 / KCTC 2358 / NCIMB 9240 / NCTC 8049), this protein is Selenide, water dikinase.